A 224-amino-acid polypeptide reads, in one-letter code: Large ribosomal subunit protein bL25 (224 aa).

The tract at residues 195 to 224 (TVEEVDEAAEVDAADVPATEQGTDESKDGE) is disordered. Acidic residues predominate over residues 197-207 (EEVDEAAEVDA).

It belongs to the bacterial ribosomal protein bL25 family. CTC subfamily. Part of the 50S ribosomal subunit; part of the 5S rRNA/L5/L18/L25 subcomplex. Contacts the 5S rRNA. Binds to the 5S rRNA independently of L5 and L18.

Functionally, this is one of the proteins that binds to the 5S RNA in the ribosome where it forms part of the central protuberance. The protein is Large ribosomal subunit protein bL25 of Psychrobacter cryohalolentis (strain ATCC BAA-1226 / DSM 17306 / VKM B-2378 / K5).